The primary structure comprises 190 residues: Adenylate kinase (190 aa).

12–17 contacts ATP; the sequence is GSGKTT. Residues 34–63 form an NMP region; it reads STGDLLREEVASGSEYGKTIDSFISKGNLV. Residues Thr-35, Arg-40, 61–63, 88–91, and Gln-95 contribute to the AMP site; these read NLV and GYPR. The segment at 130–136 is LID; that stretch reads GRARGAD. Arg-131 lines the ATP pocket. 2 residues coordinate AMP: Arg-133 and Arg-145. ATP is bound at residue Arg-173.

Belongs to the adenylate kinase family. In terms of assembly, monomer.

Its subcellular location is the cytoplasm. The enzyme catalyses AMP + ATP = 2 ADP. Its pathway is purine metabolism; AMP biosynthesis via salvage pathway; AMP from ADP: step 1/1. Functionally, catalyzes the reversible transfer of the terminal phosphate group between ATP and AMP. Plays an important role in cellular energy homeostasis and in adenine nucleotide metabolism. The chain is Adenylate kinase from Helicobacter hepaticus (strain ATCC 51449 / 3B1).